We begin with the raw amino-acid sequence, 270 residues long: NAD kinase (270 aa).

The active-site Proton acceptor is the D45. Residues 45–46 (DG), 121–122 (NE), K147, D149, 160–165 (TAYSKS), and A184 each bind NAD(+).

The protein belongs to the NAD kinase family. Requires a divalent metal cation as cofactor.

The protein localises to the cytoplasm. The enzyme catalyses NAD(+) + ATP = ADP + NADP(+) + H(+). Functionally, involved in the regulation of the intracellular balance of NAD and NADP, and is a key enzyme in the biosynthesis of NADP. Catalyzes specifically the phosphorylation on 2'-hydroxyl of the adenosine moiety of NAD to yield NADP. In Lactobacillus johnsonii (strain CNCM I-12250 / La1 / NCC 533), this protein is NAD kinase.